Consider the following 698-residue polypeptide: Elongation factor G 1 (698 aa).

The tr-type G domain maps to 8 to 290; that stretch reads ERYRNIGICA…AVVEFLPAPV (283 aa). GTP contacts are provided by residues 17-24, 88-92, and 142-145; these read AHVDAGKT, DTPGH, and NKMD.

The protein belongs to the TRAFAC class translation factor GTPase superfamily. Classic translation factor GTPase family. EF-G/EF-2 subfamily.

It is found in the cytoplasm. Catalyzes the GTP-dependent ribosomal translocation step during translation elongation. During this step, the ribosome changes from the pre-translocational (PRE) to the post-translocational (POST) state as the newly formed A-site-bound peptidyl-tRNA and P-site-bound deacylated tRNA move to the P and E sites, respectively. Catalyzes the coordinated movement of the two tRNA molecules, the mRNA and conformational changes in the ribosome. This chain is Elongation factor G 1, found in Shewanella sp. (strain MR-4).